Here is a 189-residue protein sequence, read N- to C-terminus: MTTTTEARALPRLKQRYRDEIKGQLHEQFSYGNVMQIPGLTKVVVNMGVGEAARDSKLIDGAVRDLTAITGQKPQITKARKSIAQFKLREGMPIGCHTTLRGDRMWEFLDRLLSLALPRIRDFRGLSPKQFDGNGNYTFGLNEQSMFHEIDQDKIDRVRGMDITVVTTATTDDEGRALLRALGFPFKEN.

It belongs to the universal ribosomal protein uL5 family. In terms of assembly, part of the 50S ribosomal subunit; part of the 5S rRNA/L5/L18/L25 subcomplex. Contacts the 5S rRNA and the P site tRNA. Forms a bridge to the 30S subunit in the 70S ribosome.

In terms of biological role, this is one of the proteins that bind and probably mediate the attachment of the 5S RNA into the large ribosomal subunit, where it forms part of the central protuberance. In the 70S ribosome it contacts protein S13 of the 30S subunit (bridge B1b), connecting the 2 subunits; this bridge is implicated in subunit movement. Contacts the P site tRNA; the 5S rRNA and some of its associated proteins might help stabilize positioning of ribosome-bound tRNAs. This chain is Large ribosomal subunit protein uL5, found in Kineococcus radiotolerans (strain ATCC BAA-149 / DSM 14245 / SRS30216).